The sequence spans 366 residues: Spermidine/putrescine import ATP-binding protein PotA (366 aa).

Positions 14–247 constitute an ABC transporter domain; it reads ISARALRKVY…PADRFVADFI (234 aa). 49-56 contributes to the ATP binding site; it reads GPSGCGKT.

The protein belongs to the ABC transporter superfamily. Spermidine/putrescine importer (TC 3.A.1.11.1) family. As to quaternary structure, the complex is composed of two ATP-binding proteins (PotA), two transmembrane proteins (PotB and PotC) and a solute-binding protein (PotD).

The protein localises to the cell inner membrane. The enzyme catalyses ATP + H2O + polyamine-[polyamine-binding protein]Side 1 = ADP + phosphate + polyamineSide 2 + [polyamine-binding protein]Side 1.. In terms of biological role, part of the ABC transporter complex PotABCD involved in spermidine/putrescine import. Responsible for energy coupling to the transport system. The sequence is that of Spermidine/putrescine import ATP-binding protein PotA from Ruegeria pomeroyi (strain ATCC 700808 / DSM 15171 / DSS-3) (Silicibacter pomeroyi).